The following is a 513-amino-acid chain: Na(+)/H(+) antiporter NhaB (513 aa).

Transmembrane regions (helical) follow at residues 21–41 (ICII…SPFV), 88–108 (IMAN…IYFM), 119–139 (LLIV…SATF), 243–263 (LPVS…LEHF), 299–318 (MGIQ…LHLA), 322–344 (IIGL…HAIG), 350–370 (PMPF…IVDL), 389–409 (LALF…VFVG), and 477–497 (MALP…EFLL).

It belongs to the NhaB Na(+)/H(+) (TC 2.A.34) antiporter family.

It is found in the cell inner membrane. It catalyses the reaction 2 Na(+)(in) + 3 H(+)(out) = 2 Na(+)(out) + 3 H(+)(in). Its function is as follows. Na(+)/H(+) antiporter that extrudes sodium in exchange for external protons. This Actinobacillus pleuropneumoniae serotype 5b (strain L20) protein is Na(+)/H(+) antiporter NhaB.